Consider the following 98-residue polypeptide: YcgL domain-containing protein Ping_1076 (98 aa).

Residues 1–85 (MLCAVYKSIR…PPVNHLQEHK (85 aa)) enclose the YcgL domain. A disordered region spans residues 75–98 (PPPVNHLQEHKDWKKKRQENKNEI).

The protein is YcgL domain-containing protein Ping_1076 of Psychromonas ingrahamii (strain DSM 17664 / CCUG 51855 / 37).